Here is a 94-residue protein sequence, read N- to C-terminus: MARLSEAEITEHLAQRPDWSLENNNEIVRTFRLANFPAAIAFVTHVAFLAEAAGHHPDIDIRYNRVRIALTTHDAGGLTEKDFALAAAIDEILG.

Belongs to the pterin-4-alpha-carbinolamine dehydratase family.

The enzyme catalyses (4aS,6R)-4a-hydroxy-L-erythro-5,6,7,8-tetrahydrobiopterin = (6R)-L-erythro-6,7-dihydrobiopterin + H2O. This chain is Putative pterin-4-alpha-carbinolamine dehydratase, found in Chloroflexus aggregans (strain MD-66 / DSM 9485).